The sequence spans 752 residues: Catalase-peroxidase (752 aa).

Positions 1–20 (MENELVSKVKAPVPGNQTNT) are disordered. Positions 111–234 (WHSAGTYRIG…LGAVQMGLIY (124 aa)) form a cross-link, tryptophyl-tyrosyl-methioninium (Trp-Tyr) (with M-260). The Proton acceptor role is filled by histidine 112. The tryptophyl-tyrosyl-methioninium (Tyr-Met) (with W-111) cross-link spans 234-260 (YVNPEGPNGKPDPAAAAVDIRETFARM). Histidine 275 contacts heme b.

It belongs to the peroxidase family. Peroxidase/catalase subfamily. In terms of assembly, homodimer or homotetramer. Heme b is required as a cofactor. Post-translationally, formation of the three residue Trp-Tyr-Met cross-link is important for the catalase, but not the peroxidase activity of the enzyme.

The catalysed reaction is H2O2 + AH2 = A + 2 H2O. The enzyme catalyses 2 H2O2 = O2 + 2 H2O. Functionally, bifunctional enzyme with both catalase and broad-spectrum peroxidase activity. The protein is Catalase-peroxidase of Koribacter versatilis (strain Ellin345).